A 236-amino-acid chain; its full sequence is ATP phosphoribosyltransferase (236 aa).

It belongs to the ATP phosphoribosyltransferase family. Short subfamily. Heteromultimer composed of HisG and HisZ subunits.

It is found in the cytoplasm. The enzyme catalyses 1-(5-phospho-beta-D-ribosyl)-ATP + diphosphate = 5-phospho-alpha-D-ribose 1-diphosphate + ATP. It participates in amino-acid biosynthesis; L-histidine biosynthesis; L-histidine from 5-phospho-alpha-D-ribose 1-diphosphate: step 1/9. Catalyzes the condensation of ATP and 5-phosphoribose 1-diphosphate to form N'-(5'-phosphoribosyl)-ATP (PR-ATP). Has a crucial role in the pathway because the rate of histidine biosynthesis seems to be controlled primarily by regulation of HisG enzymatic activity. This is ATP phosphoribosyltransferase (hisG) from Cereibacter sphaeroides (strain ATCC 17023 / DSM 158 / JCM 6121 / CCUG 31486 / LMG 2827 / NBRC 12203 / NCIMB 8253 / ATH 2.4.1.) (Rhodobacter sphaeroides).